The sequence spans 32 residues: Alpha-amylase inhibitor AAI (32 aa).

3 disulfides stabilise this stretch: cysteine 1–cysteine 18, cysteine 8–cysteine 23, and cysteine 17–cysteine 31.

Endosperm.

Functionally, alpha-amylase inhibitor. It is active against alpha-amylases from Tribolium castaneum and Prostephanus truncatus larvae. In Amaranthus hypochondriacus (Prince-of-Wales feather), this protein is Alpha-amylase inhibitor AAI (AAI).